A 338-amino-acid chain; its full sequence is Ketol-acid reductoisomerase (NADP(+)) (338 aa).

In terms of domain architecture, KARI N-terminal Rossmann spans 1–181; that stretch reads MNVYYDRDCD…GGGRTGIIET (181 aa). NADP(+)-binding positions include 24 to 27, R47, S50, S52, and 82 to 85; these read YGSQ and DEFQ. The active site involves H107. Residue G133 coordinates NADP(+). Residues 182–327 form the KARI C-terminal knotted domain; it reads TFKDETETDL…GNLRAMMPWI (146 aa). 4 residues coordinate Mg(2+): D190, E194, E226, and E230. S251 is a binding site for substrate.

This sequence belongs to the ketol-acid reductoisomerase family. The cofactor is Mg(2+).

The catalysed reaction is (2R)-2,3-dihydroxy-3-methylbutanoate + NADP(+) = (2S)-2-acetolactate + NADPH + H(+). It carries out the reaction (2R,3R)-2,3-dihydroxy-3-methylpentanoate + NADP(+) = (S)-2-ethyl-2-hydroxy-3-oxobutanoate + NADPH + H(+). It functions in the pathway amino-acid biosynthesis; L-isoleucine biosynthesis; L-isoleucine from 2-oxobutanoate: step 2/4. Its pathway is amino-acid biosynthesis; L-valine biosynthesis; L-valine from pyruvate: step 2/4. Functionally, involved in the biosynthesis of branched-chain amino acids (BCAA). Catalyzes an alkyl-migration followed by a ketol-acid reduction of (S)-2-acetolactate (S2AL) to yield (R)-2,3-dihydroxy-isovalerate. In the isomerase reaction, S2AL is rearranged via a Mg-dependent methyl migration to produce 3-hydroxy-3-methyl-2-ketobutyrate (HMKB). In the reductase reaction, this 2-ketoacid undergoes a metal-dependent reduction by NADPH to yield (R)-2,3-dihydroxy-isovalerate. The protein is Ketol-acid reductoisomerase (NADP(+)) of Trichlorobacter lovleyi (strain ATCC BAA-1151 / DSM 17278 / SZ) (Geobacter lovleyi).